A 371-amino-acid polypeptide reads, in one-letter code: Aspartate-semialdehyde dehydrogenase (371 aa).

NADP(+)-binding positions include 11-14 (RGMV), 38-39 (TS), and Gln-75. Arg-104 serves as a coordination point for phosphate. Cys-137 functions as the Acyl-thioester intermediate in the catalytic mechanism. A substrate-binding site is contributed by Gln-164. 167–168 (SG) is an NADP(+) binding site. Position 243 (Glu-243) interacts with substrate. Position 246 (Lys-246) interacts with phosphate. A substrate-binding site is contributed by Arg-269. His-276 acts as the Proton acceptor in catalysis. Gln-352 is a binding site for NADP(+).

Belongs to the aspartate-semialdehyde dehydrogenase family. Homodimer.

It catalyses the reaction L-aspartate 4-semialdehyde + phosphate + NADP(+) = 4-phospho-L-aspartate + NADPH + H(+). Its pathway is amino-acid biosynthesis; L-lysine biosynthesis via DAP pathway; (S)-tetrahydrodipicolinate from L-aspartate: step 2/4. The protein operates within amino-acid biosynthesis; L-methionine biosynthesis via de novo pathway; L-homoserine from L-aspartate: step 2/3. It functions in the pathway amino-acid biosynthesis; L-threonine biosynthesis; L-threonine from L-aspartate: step 2/5. Catalyzes the NADPH-dependent formation of L-aspartate-semialdehyde (L-ASA) by the reductive dephosphorylation of L-aspartyl-4-phosphate. The protein is Aspartate-semialdehyde dehydrogenase of Buchnera aphidicola subsp. Schizaphis graminum (strain Sg).